Consider the following 186-residue polypeptide: Dual-action ribosomal maturation protein DarP (186 aa).

Belongs to the DarP family.

The protein resides in the cytoplasm. In terms of biological role, member of a network of 50S ribosomal subunit biogenesis factors which assembles along the 30S-50S interface, preventing incorrect 23S rRNA structures from forming. Promotes peptidyl transferase center (PTC) maturation. The polypeptide is Dual-action ribosomal maturation protein DarP (Proteus mirabilis (strain HI4320)).